Reading from the N-terminus, the 350-residue chain is Lipoyl synthase (350 aa).

Residues 1 to 39 (MSDTSSPKPVASGEKFRTAQGITAIKDGQKRRASAEPQV) form a disordered region. Residues Cys-73, Cys-78, Cys-84, Cys-99, Cys-103, Cys-106, and Ser-314 each contribute to the [4Fe-4S] cluster site. The Radical SAM core domain occupies 85–303 (WSNGTATIML…RDIGLEKGFM (219 aa)).

This sequence belongs to the radical SAM superfamily. Lipoyl synthase family. Requires [4Fe-4S] cluster as cofactor.

Its subcellular location is the cytoplasm. The enzyme catalyses [[Fe-S] cluster scaffold protein carrying a second [4Fe-4S](2+) cluster] + N(6)-octanoyl-L-lysyl-[protein] + 2 oxidized [2Fe-2S]-[ferredoxin] + 2 S-adenosyl-L-methionine + 4 H(+) = [[Fe-S] cluster scaffold protein] + N(6)-[(R)-dihydrolipoyl]-L-lysyl-[protein] + 4 Fe(3+) + 2 hydrogen sulfide + 2 5'-deoxyadenosine + 2 L-methionine + 2 reduced [2Fe-2S]-[ferredoxin]. It functions in the pathway protein modification; protein lipoylation via endogenous pathway; protein N(6)-(lipoyl)lysine from octanoyl-[acyl-carrier-protein]: step 2/2. Catalyzes the radical-mediated insertion of two sulfur atoms into the C-6 and C-8 positions of the octanoyl moiety bound to the lipoyl domains of lipoate-dependent enzymes, thereby converting the octanoylated domains into lipoylated derivatives. The protein is Lipoyl synthase of Ectopseudomonas mendocina (strain ymp) (Pseudomonas mendocina).